Reading from the N-terminus, the 157-residue chain is Protein Smg homolog (157 aa).

The protein belongs to the Smg family.

This Aliivibrio salmonicida (strain LFI1238) (Vibrio salmonicida (strain LFI1238)) protein is Protein Smg homolog.